Here is a 148-residue protein sequence, read N- to C-terminus: MRLHLITVGEPKLAYARAGWDEYEKRLRRYHKVQVTRVGGRTGAQASEAIARAAGRAPLILLDPRGEQFTSESLSAYLDAQALDGRGELAFAVGGPEGHTDDLRARAHRLWSLSLLTLPHDLAMILLLEALYRAATISAGEPYHRGST.

S-adenosyl-L-methionine-binding positions include leucine 62, glycine 94, and 113-118; that span reads LSLLTL.

It belongs to the RNA methyltransferase RlmH family. In terms of assembly, homodimer.

The protein resides in the cytoplasm. It carries out the reaction pseudouridine(1915) in 23S rRNA + S-adenosyl-L-methionine = N(3)-methylpseudouridine(1915) in 23S rRNA + S-adenosyl-L-homocysteine + H(+). Functionally, specifically methylates the pseudouridine at position 1915 (m3Psi1915) in 23S rRNA. This Deinococcus geothermalis (strain DSM 11300 / CIP 105573 / AG-3a) protein is Ribosomal RNA large subunit methyltransferase H.